The following is a 170-amino-acid chain: Ribosome maturation factor RimP (170 aa).

Belongs to the RimP family.

Its subcellular location is the cytoplasm. Its function is as follows. Required for maturation of 30S ribosomal subunits. This chain is Ribosome maturation factor RimP, found in Acidothermus cellulolyticus (strain ATCC 43068 / DSM 8971 / 11B).